The following is a 986-amino-acid chain: Isoleucine--tRNA ligase (986 aa).

Positions 534–538 match the 'KMSKS' region motif; sequence EMHKS. Position 537 (Lys537) interacts with ATP.

This sequence belongs to the class-I aminoacyl-tRNA synthetase family. IleS type 2 subfamily. In terms of assembly, monomer. Zn(2+) serves as cofactor.

It is found in the cytoplasm. The enzyme catalyses tRNA(Ile) + L-isoleucine + ATP = L-isoleucyl-tRNA(Ile) + AMP + diphosphate. Its function is as follows. Catalyzes the attachment of isoleucine to tRNA(Ile). As IleRS can inadvertently accommodate and process structurally similar amino acids such as valine, to avoid such errors it has two additional distinct tRNA(Ile)-dependent editing activities. One activity is designated as 'pretransfer' editing and involves the hydrolysis of activated Val-AMP. The other activity is designated 'posttransfer' editing and involves deacylation of mischarged Val-tRNA(Ile). This is Isoleucine--tRNA ligase (ileS) from Saccharolobus solfataricus (strain ATCC 35092 / DSM 1617 / JCM 11322 / P2) (Sulfolobus solfataricus).